A 475-amino-acid polypeptide reads, in one-letter code: tRNA-2-methylthio-N(6)-dimethylallyladenosine synthase (475 aa).

The 121-residue stretch at 7-127 (RKLHIKSYGC…LPKLLAKARD (121 aa)) folds into the MTTase N-terminal domain. Residues cysteine 16, cysteine 52, cysteine 90, cysteine 168, cysteine 172, and cysteine 175 each coordinate [4Fe-4S] cluster. The region spanning 154–388 (RARGVSAFVT…AQLQALIDAQ (235 aa)) is the Radical SAM core domain. Residues 394-456 (RAAIGRTVEV…RYSLKGRLAS (63 aa)) form the TRAM domain.

The protein belongs to the methylthiotransferase family. MiaB subfamily. Monomer. The cofactor is [4Fe-4S] cluster.

The protein resides in the cytoplasm. The catalysed reaction is N(6)-dimethylallyladenosine(37) in tRNA + (sulfur carrier)-SH + AH2 + 2 S-adenosyl-L-methionine = 2-methylsulfanyl-N(6)-dimethylallyladenosine(37) in tRNA + (sulfur carrier)-H + 5'-deoxyadenosine + L-methionine + A + S-adenosyl-L-homocysteine + 2 H(+). In terms of biological role, catalyzes the methylthiolation of N6-(dimethylallyl)adenosine (i(6)A), leading to the formation of 2-methylthio-N6-(dimethylallyl)adenosine (ms(2)i(6)A) at position 37 in tRNAs that read codons beginning with uridine. The protein is tRNA-2-methylthio-N(6)-dimethylallyladenosine synthase of Afipia carboxidovorans (strain ATCC 49405 / DSM 1227 / KCTC 32145 / OM5) (Oligotropha carboxidovorans).